The sequence spans 280 residues: Energy-coupling factor transporter ATP-binding protein EcfA1 (280 aa).

One can recognise an ABC transporter domain in the interval Leu6–Asp241. Residue Gly40 to Ser47 coordinates ATP.

Belongs to the ABC transporter superfamily. Energy-coupling factor EcfA family. As to quaternary structure, forms a stable energy-coupling factor (ECF) transporter complex composed of 2 membrane-embedded substrate-binding proteins (S component), 2 ATP-binding proteins (A component) and 2 transmembrane proteins (T component).

It is found in the cell membrane. Its function is as follows. ATP-binding (A) component of a common energy-coupling factor (ECF) ABC-transporter complex. Unlike classic ABC transporters this ECF transporter provides the energy necessary to transport a number of different substrates. The sequence is that of Energy-coupling factor transporter ATP-binding protein EcfA1 from Bacillus cereus (strain ATCC 10987 / NRS 248).